Reading from the N-terminus, the 598-residue chain is Dihydroxy-acid dehydratase, mitochondrial (598 aa).

The N-terminal 18 residues, 1–18 (MMFCKLLRCQNGIASKRA), are a transit peptide targeting the mitochondrion. C84 contacts [2Fe-2S] cluster. D116 serves as a coordination point for Mg(2+). C157 is a [2Fe-2S] cluster binding site. Residue D158 participates in Mg(2+) binding. [2Fe-2S] cluster is bound at residue C232. E485 is a Mg(2+) binding site. S511 serves as the catalytic Proton acceptor.

The protein belongs to the IlvD/Edd family. It depends on [2Fe-2S] cluster as a cofactor. The cofactor is Mg(2+).

The protein resides in the mitochondrion. The enzyme catalyses (2R)-2,3-dihydroxy-3-methylbutanoate = 3-methyl-2-oxobutanoate + H2O. It carries out the reaction (2R,3R)-2,3-dihydroxy-3-methylpentanoate = (S)-3-methyl-2-oxopentanoate + H2O. It functions in the pathway amino-acid biosynthesis; L-isoleucine biosynthesis; L-isoleucine from 2-oxobutanoate: step 3/4. Its pathway is amino-acid biosynthesis; L-valine biosynthesis; L-valine from pyruvate: step 3/4. In terms of biological role, dihydroxyacid dehydratase that catalyzes the third step in the common pathway leading to biosynthesis of branched-chain amino acids. Catalyzes the dehydration of (2R,3R)-2,3-dihydroxy-3-methylpentanoate (2,3-dihydroxy-3-methylvalerate) into 2-oxo-3-methylpentanoate (2-oxo-3-methylvalerate) and of (2R)-2,3-dihydroxy-3-methylbutanoate (2,3-dihydroxyisovalerate) into 2-oxo-3-methylbutanoate (2-oxoisovalerate), the penultimate precursor to L-isoleucine and L-valine, respectively. This Schizosaccharomyces pombe (strain 972 / ATCC 24843) (Fission yeast) protein is Dihydroxy-acid dehydratase, mitochondrial.